Here is a 154-residue protein sequence, read N- to C-terminus: Ribosome maturation factor RimP (154 aa).

This sequence belongs to the RimP family.

Its subcellular location is the cytoplasm. Its function is as follows. Required for maturation of 30S ribosomal subunits. This Natranaerobius thermophilus (strain ATCC BAA-1301 / DSM 18059 / JW/NM-WN-LF) protein is Ribosome maturation factor RimP.